The primary structure comprises 341 residues: DNA-directed RNA polymerase subunit alpha (341 aa).

The alpha N-terminal domain (alpha-NTD) stretch occupies residues methionine 1–glutamate 223. The tract at residues proline 268–aspartate 341 is alpha C-terminal domain (alpha-CTD).

Belongs to the RNA polymerase alpha chain family. In terms of assembly, homodimer. The RNAP catalytic core consists of 2 alpha, 1 beta, 1 beta' and 1 omega subunit. When a sigma factor is associated with the core the holoenzyme is formed, which can initiate transcription.

It carries out the reaction RNA(n) + a ribonucleoside 5'-triphosphate = RNA(n+1) + diphosphate. DNA-dependent RNA polymerase catalyzes the transcription of DNA into RNA using the four ribonucleoside triphosphates as substrates. The sequence is that of DNA-directed RNA polymerase subunit alpha from Deinococcus radiodurans (strain ATCC 13939 / DSM 20539 / JCM 16871 / CCUG 27074 / LMG 4051 / NBRC 15346 / NCIMB 9279 / VKM B-1422 / R1).